We begin with the raw amino-acid sequence, 319 residues long: Acetyl-coenzyme A carboxylase carboxyl transferase subunit alpha (319 aa).

The 262-residue stretch at 31–292 (EIDSAIRSLR…KTYLSRQLSE (262 aa)) folds into the CoA carboxyltransferase C-terminal domain.

The protein belongs to the AccA family. Acetyl-CoA carboxylase is a heterohexamer composed of biotin carboxyl carrier protein (AccB), biotin carboxylase (AccC) and two subunits each of ACCase subunit alpha (AccA) and ACCase subunit beta (AccD).

The protein resides in the cytoplasm. The enzyme catalyses N(6)-carboxybiotinyl-L-lysyl-[protein] + acetyl-CoA = N(6)-biotinyl-L-lysyl-[protein] + malonyl-CoA. The protein operates within lipid metabolism; malonyl-CoA biosynthesis; malonyl-CoA from acetyl-CoA: step 1/1. Its function is as follows. Component of the acetyl coenzyme A carboxylase (ACC) complex. First, biotin carboxylase catalyzes the carboxylation of biotin on its carrier protein (BCCP) and then the CO(2) group is transferred by the carboxyltransferase to acetyl-CoA to form malonyl-CoA. The sequence is that of Acetyl-coenzyme A carboxylase carboxyl transferase subunit alpha from Rhodopirellula baltica (strain DSM 10527 / NCIMB 13988 / SH1).